Reading from the N-terminus, the 156-residue chain is Snaclec rhinocetin subunit alpha (156 aa).

An N-terminal signal peptide occupies residues 1-23 (MGRFIFLSSGWLVVFLSLSGTGA). Cystine bridges form between C27/C38, C55/C150, and C125/C142. The C-type lectin domain occupies 34 to 151 (YEGHCYKFFF…CGDNYPFVCM (118 aa)).

The protein belongs to the snaclec family. Heterodimer; disulfide-linked. In terms of tissue distribution, expressed by the venom gland.

The protein resides in the secreted. In terms of biological role, antagonist of the alpha-2 subunit of the integrin alpha-2/beta-1 (ITGA2/ITGB1) on human platelets and endothelial cells. This protein inhibits collagen-stimulated activation of human platelets in a dose-dependent manner. In addition, it antagonizes the binding of monoclonal antibodies against the alpha-2 subunit of integrin alpha-2/beta-1 to platelets and it coimmunoprecipitates with this integrin. The sequence is that of Snaclec rhinocetin subunit alpha from Bitis rhinoceros (West African gaboon viper).